The primary structure comprises 264 residues: Thymidylate synthase (264 aa).

Arginine 21 contacts dUMP. Position 51 (histidine 51) interacts with (6R)-5,10-methylene-5,6,7,8-tetrahydrofolate. 126 to 127 (RR) serves as a coordination point for dUMP. Catalysis depends on cysteine 146, which acts as the Nucleophile. DUMP-binding positions include 166–169 (RSCD), asparagine 177, and 207–209 (HLY). Aspartate 169 contributes to the (6R)-5,10-methylene-5,6,7,8-tetrahydrofolate binding site. Serine 263 is a binding site for (6R)-5,10-methylene-5,6,7,8-tetrahydrofolate.

Belongs to the thymidylate synthase family. Bacterial-type ThyA subfamily. In terms of assembly, homodimer.

Its subcellular location is the cytoplasm. It catalyses the reaction dUMP + (6R)-5,10-methylene-5,6,7,8-tetrahydrofolate = 7,8-dihydrofolate + dTMP. It functions in the pathway pyrimidine metabolism; dTTP biosynthesis. Catalyzes the reductive methylation of 2'-deoxyuridine-5'-monophosphate (dUMP) to 2'-deoxythymidine-5'-monophosphate (dTMP) while utilizing 5,10-methylenetetrahydrofolate (mTHF) as the methyl donor and reductant in the reaction, yielding dihydrofolate (DHF) as a by-product. This enzymatic reaction provides an intracellular de novo source of dTMP, an essential precursor for DNA biosynthesis. The protein is Thymidylate synthase of Buchnera aphidicola subsp. Acyrthosiphon pisum (strain 5A).